Reading from the N-terminus, the 452-residue chain is MLIEYLIRITVMVITSERLLILMGLCDESFHFPVMIRVVFNAAVAIVIALVMSKLYKVLFAPLDLRRKLEDVGYVHHDHSVSREENIRDTQRRKKLGNTPPVFPNGWFKVADSTWIKKGQVKSIYFFGEQLALFRNKRGLLRALDAYCPHLLANMAAGGKVVNSDCLECPFHGWKFSGETGKLVDVPYAQKVPTFVSVKKWSCCEVDGMAYLWYHCDGGEPKWVLPSSVTINTLKYAGKTEHIINSHIQDIPENAADISHLDHLHKPVIGSDVEKTNESLLNNLIFHSIQASWKPPTDPNEPHRSTMSIKDNIHLSIFNIKIPLLYLEFEIDQIGPGAVHIHVRTPFFRGLMLQNVTPIEPFVQKLTHSFYVSPWVPVCIAKAFYLLETTQIERDILMWNNKTYFRQPVLVKEESALAKHRRWYQQFYSENSPRMNHRGDLVYPGKPKLADW.

2 helical membrane-spanning segments follow: residues 6 to 26 (LIRI…MGLC) and 32 to 52 (FPVM…ALVM). The region spanning 107 to 212 (WFKVADSTWI…CCEVDGMAYL (106 aa)) is the Rieske domain. Residues cysteine 148, histidine 150, cysteine 169, and histidine 172 each contribute to the [2Fe-2S] cluster site.

Belongs to the cholesterol 7-desaturase family. The cofactor is [2Fe-2S] cluster.

Its subcellular location is the membrane. The catalysed reaction is cholesterol + NADPH + O2 + H(+) = 7-dehydrocholesterol + NADP(+) + 2 H2O. It carries out the reaction cholesterol + NADH + O2 + H(+) = 7-dehydrocholesterol + NAD(+) + 2 H2O. It functions in the pathway steroid hormone biosynthesis; dafachronic acid biosynthesis. Functionally, catalyzes the production of 7-dehydrocholesterol (7-DHC or cholesta-5,7-dien-3beta-ol) by inserting a double bond (desaturating) at the C7-C8 single bond of cholesterol. Essential regulator of steroid biosynthesis as this reaction is the first step in the synthesis of the steroid hormone Delta(7)-dafachronic acid. This chain is Cholesterol 7-desaturase nvd 2, found in Ciona intestinalis (Transparent sea squirt).